A 196-amino-acid chain; its full sequence is HTH-type transcriptional regulator Hpr (196 aa).

The region spanning 13 to 157 (SIVFSHKMAL…LICIVRHIYG (145 aa)) is the HTH marR-type domain. A DNA-binding region (H-T-H motif) is located at residues 63–86 (ISDIASHGVMHVSTAFNFSKKLEA).

In terms of assembly, homodimer.

Functionally, negative regulator of protease production and sporulation. This is HTH-type transcriptional regulator Hpr from Shouchella clausii (strain KSM-K16) (Alkalihalobacillus clausii).